The following is a 447-amino-acid chain: MAEPPKLRVLMVSDFFFPNFGGVENHIYYLSQCLLKLGHKVVVMTHAYGNRSGVRYMTGGLKVYYVPWRPFVMQTTFPTVYGTLPIVRTILRREKITVVHGHQAFSTLCHEALMHARTMGYKVVFTDHSLYGFADVGSIHMNKVLQFSLADIDQAICVSHTSKENTVLRSGLSPAKVFMIPNAVDTAMFKPASVRPSTDIITIVVISRLVYRKGADLLVEVIPEVCRLYPNVRFVVGGDGPKHVRLEEMREKHSLQDRVEMLGAVPHSRVRSVLVTGHIFLNSSLTEAFCIAILEAASCGLLTVSTRVGGVPEVLPDDMVVLAEPDPDDMVRAIEKAISILPTINPEEMHNRMKKLYSWQDVAKRTEIVYDRALKCSNRSLLERLMRFLSCGAWAGKLFCMVMILDYLLWRLLQLLQPDEDIEEAPDICLCHHRGVEVSEGLRKKIK.

The Cytoplasmic segment spans residues 1–387 (MAEPPKLRVL…NRSLLERLMR (387 aa)). The chain crosses the membrane as a helical span at residues 388-408 (FLSCGAWAGKLFCMVMILDYL). The Lumenal segment spans residues 409-447 (LWRLLQLLQPDEDIEEAPDICLCHHRGVEVSEGLRKKIK).

The protein belongs to the glycosyltransferase group 1 family. Glycosyltransferase 4 subfamily. As to expression, expressed in roots, stems, leaves, flowers and pollen grains.

The protein localises to the endoplasmic reticulum membrane. It carries out the reaction a 1,2-diacyl-sn-glycero-3-phospho-(1D-myo-inositol) + UDP-N-acetyl-alpha-D-glucosamine = a 6-(N-acetyl-alpha-D-glucosaminyl)-1-(1,2-diacyl-sn-glycero-3-phospho)-1D-myo-inositol + UDP + H(+). The protein operates within glycolipid biosynthesis; glycosylphosphatidylinositol-anchor biosynthesis. Its function is as follows. Necessary for the synthesis of N-acetylglucosaminyl-phosphatidylinositol, the very early intermediate in GPI-anchor biosynthesis. Required for pollen germination and pollen tube growth. The chain is Phosphatidylinositol N-acetylglucosaminyltransferase subunit A from Arabidopsis thaliana (Mouse-ear cress).